The primary structure comprises 363 residues: Spermidine/putrescine import ATP-binding protein PotA (363 aa).

The ABC transporter domain maps to 9 to 239 (IDVRNAVKRY…PANRFVADFI (231 aa)). 41 to 48 (GPSGCGKT) contributes to the ATP binding site.

The protein belongs to the ABC transporter superfamily. Spermidine/putrescine importer (TC 3.A.1.11.1) family. In terms of assembly, the complex is composed of two ATP-binding proteins (PotA), two transmembrane proteins (PotB and PotC) and a solute-binding protein (PotD).

It localises to the cell inner membrane. The catalysed reaction is ATP + H2O + polyamine-[polyamine-binding protein]Side 1 = ADP + phosphate + polyamineSide 2 + [polyamine-binding protein]Side 1.. Functionally, part of the ABC transporter complex PotABCD involved in spermidine/putrescine import. Responsible for energy coupling to the transport system. In Roseobacter denitrificans (strain ATCC 33942 / OCh 114) (Erythrobacter sp. (strain OCh 114)), this protein is Spermidine/putrescine import ATP-binding protein PotA.